The primary structure comprises 418 residues: Putative O-antigen transporter (418 aa).

The next 11 membrane-spanning stretches (helical) occupy residues 8–28, 37–57, 85–105, 124–144, 165–185, 217–237, 251–271, 297–317, 334–354, 362–382, and 385–405; these read VWNL…LGFL, FGVY…DVGL, FLVL…DGIV, LLAI…ILEG, IPAI…GLIF, LFFF…MVYF, VAFY…PAAI, LLMF…SGLV, LNVL…FSAI, ITAL…YFMV, and YGLL…ALLL.

Belongs to the polysaccharide synthase family.

It localises to the cell inner membrane. It functions in the pathway bacterial outer membrane biogenesis; lipopolysaccharide biosynthesis. In terms of biological role, could be an O-antigen transporter. This Shigella flexneri protein is Putative O-antigen transporter (rfbE).